Here is a 47-residue protein sequence, read N- to C-terminus: Ribosome-inactivating protein luffin P1 (47 aa).

2 cysteine pairs are disulfide-bonded: Cys-12-Cys-33 and Cys-16-Cys-29.

In terms of assembly, homotetramer.

The enzyme catalyses Endohydrolysis of the N-glycosidic bond at one specific adenosine on the 28S rRNA.. Functionally, inhibits protein synthesis in animal cells. In Luffa aegyptiaca (Sponge gourd), this protein is Ribosome-inactivating protein luffin P1.